The primary structure comprises 215 residues: Thiamine-phosphate synthase (215 aa).

Residues 43 to 47 (QLRDK) and N75 contribute to the 4-amino-2-methyl-5-(diphosphooxymethyl)pyrimidine site. Mg(2+) contacts are provided by D76 and D95. S114 provides a ligand contact to 4-amino-2-methyl-5-(diphosphooxymethyl)pyrimidine. Residue 141-143 (TPT) coordinates 2-[(2R,5Z)-2-carboxy-4-methylthiazol-5(2H)-ylidene]ethyl phosphate. K144 contributes to the 4-amino-2-methyl-5-(diphosphooxymethyl)pyrimidine binding site. G172 contacts 2-[(2R,5Z)-2-carboxy-4-methylthiazol-5(2H)-ylidene]ethyl phosphate.

Belongs to the thiamine-phosphate synthase family. It depends on Mg(2+) as a cofactor.

The enzyme catalyses 2-[(2R,5Z)-2-carboxy-4-methylthiazol-5(2H)-ylidene]ethyl phosphate + 4-amino-2-methyl-5-(diphosphooxymethyl)pyrimidine + 2 H(+) = thiamine phosphate + CO2 + diphosphate. The catalysed reaction is 2-(2-carboxy-4-methylthiazol-5-yl)ethyl phosphate + 4-amino-2-methyl-5-(diphosphooxymethyl)pyrimidine + 2 H(+) = thiamine phosphate + CO2 + diphosphate. It carries out the reaction 4-methyl-5-(2-phosphooxyethyl)-thiazole + 4-amino-2-methyl-5-(diphosphooxymethyl)pyrimidine + H(+) = thiamine phosphate + diphosphate. Its pathway is cofactor biosynthesis; thiamine diphosphate biosynthesis; thiamine phosphate from 4-amino-2-methyl-5-diphosphomethylpyrimidine and 4-methyl-5-(2-phosphoethyl)-thiazole: step 1/1. In terms of biological role, condenses 4-methyl-5-(beta-hydroxyethyl)thiazole monophosphate (THZ-P) and 2-methyl-4-amino-5-hydroxymethyl pyrimidine pyrophosphate (HMP-PP) to form thiamine monophosphate (TMP). This is Thiamine-phosphate synthase from Streptomyces avermitilis (strain ATCC 31267 / DSM 46492 / JCM 5070 / NBRC 14893 / NCIMB 12804 / NRRL 8165 / MA-4680).